Reading from the N-terminus, the 212-residue chain is Large ribosomal subunit protein bL25 (212 aa).

A disordered region spans residues 1-25; it reads MSQSTIHKIAVKKRTETGKNENNRL. Residues 13–24 show a composition bias toward basic and acidic residues; the sequence is KRTETGKNENNR.

It belongs to the bacterial ribosomal protein bL25 family. CTC subfamily. As to quaternary structure, part of the 50S ribosomal subunit; part of the 5S rRNA/L5/L18/L25 subcomplex. Contacts the 5S rRNA. Binds to the 5S rRNA independently of L5 and L18.

This is one of the proteins that binds to the 5S RNA in the ribosome where it forms part of the central protuberance. This Leptospira borgpetersenii serovar Hardjo-bovis (strain JB197) protein is Large ribosomal subunit protein bL25.